The following is a 204-amino-acid chain: MVRVKIIRHSERLDYTNPLYWLICFGHYWADSPLTKHGYEIAKKKGKELAESGFNPKYIYTSPYSRTMATATEIKTVFPNSHLVIEYLLAEYQPYFKHKINLYPDGIPTEFNGQETEFNYPETKSKFRERVEFIITKLIENNDEDIVIVTHGELLKVYIDYIQSIYPDLLLDSKVTPYLTTLSFEFDKKRDMIIEESVNIDFSN.

Histidine 9 serves as the catalytic Tele-phosphohistidine intermediate. The active-site Proton donor/acceptor is the glutamate 86.

Belongs to the phosphoglycerate mutase family.

This is an uncharacterized protein from Acanthamoeba polyphaga (Amoeba).